A 252-amino-acid polypeptide reads, in one-letter code: 3-dehydroquinate dehydratase (252 aa).

3-dehydroquinate is bound by residues Ser-21, 46-48 (EWR), and Arg-82. The Proton donor/acceptor role is filled by His-143. Catalysis depends on Lys-170, which acts as the Schiff-base intermediate with substrate. 3-dehydroquinate contacts are provided by Arg-213, Ser-232, and Gln-236.

It belongs to the type-I 3-dehydroquinase family. Homodimer.

It carries out the reaction 3-dehydroquinate = 3-dehydroshikimate + H2O. Its pathway is metabolic intermediate biosynthesis; chorismate biosynthesis; chorismate from D-erythrose 4-phosphate and phosphoenolpyruvate: step 3/7. Its function is as follows. Involved in the third step of the chorismate pathway, which leads to the biosynthesis of aromatic amino acids. Catalyzes the cis-dehydration of 3-dehydroquinate (DHQ) and introduces the first double bond of the aromatic ring to yield 3-dehydroshikimate. The protein is 3-dehydroquinate dehydratase of Salmonella dublin (strain CT_02021853).